The sequence spans 403 residues: MADYTIPSELPPILKDLSREVLRHQPADLVQFCHDYFAKLLAQQRKVLMDSADPATKATIASTAGPAVDADEAARANSYAYSTDDGFGTEDDDDDDDDEDDEAAIPPPVVNRGRRTSVSAESMAPTAHDVDAVKTVIPKSDEQRARIQASIGNNFLFRNLDEDQYTDVVNAMAEKKVAAGEVVIRQGGVGDYFYVVETGALDVFVNRNGNGDVKVTDYSAGGSFGELALMYNAPRAATVVATAESVLWALDRVTFRRILMDHTSRKRRMYEAFLEEVPLLSSLEPYERHKIADALESVAYADGDVVIRQGDVGENFYIIEAGDAEVIKIDENGEEHHFRPLHKGNYFGELALLSDKPRVATIRAKGKLKCAKLGKKAFTRLLGPLADIMQRNTQDYEKYPGEH.

Residues 1–155 (MADYTIPSEL…RIQASIGNNF (155 aa)) form a dimerization and phosphorylation region. Residues 79–125 (YAYSTDDGFGTEDDDDDDDDEDDEAAIPPPVVNRGRRTSVSAESMAP) are disordered. Over residues 87-103 (FGTEDDDDDDDDEDDEA) the composition is skewed to acidic residues. Ser117 carries the post-translational modification Phosphoserine. 3',5'-cyclic AMP is bound by residues 156-278 (LFRN…EEVP), Glu226, Arg235, 279-403 (LLSS…PGEH), Glu349, and Arg358.

This sequence belongs to the cAMP-dependent kinase regulatory chain family. As to quaternary structure, tetramer, composed of 2 regulatory (R) and 2 catalytic (C) subunits. In the presence of cAMP it dissociates into 2 active monomeric C subunits and an R dimer that binds four cAMP molecules.

This is cAMP-dependent protein kinase regulatory subunit (PKAR) from Blastocladiella emersonii (Aquatic fungus).